The sequence spans 156 residues: Small ribosomal subunit protein uS7 (156 aa).

Belongs to the universal ribosomal protein uS7 family. As to quaternary structure, part of the 30S ribosomal subunit. Contacts proteins S9 and S11.

In terms of biological role, one of the primary rRNA binding proteins, it binds directly to 16S rRNA where it nucleates assembly of the head domain of the 30S subunit. Is located at the subunit interface close to the decoding center, probably blocks exit of the E-site tRNA. The polypeptide is Small ribosomal subunit protein uS7 (Desulfitobacterium hafniense (strain DSM 10664 / DCB-2)).